The sequence spans 221 residues: UPF0758 protein YicR (221 aa).

The 123-residue stretch at 99-221 (ALLSPEMTRE…YVSFAERGWI (123 aa)) folds into the MPN domain. Positions 170, 172, and 183 each coordinate Zn(2+). The short motif at 170–183 (HNHPSGCAEPSKAD) is the JAMM motif element.

The protein belongs to the UPF0758 family. YicR subfamily.

The polypeptide is UPF0758 protein YicR (Salmonella agona (strain SL483)).